The primary structure comprises 330 residues: Ribosomal RNA small subunit methyltransferase H (330 aa).

Residues 40–42 (GGY), aspartate 58, phenylalanine 85, aspartate 101, and glutamine 108 contribute to the S-adenosyl-L-methionine site.

Belongs to the methyltransferase superfamily. RsmH family.

It localises to the cytoplasm. It catalyses the reaction cytidine(1402) in 16S rRNA + S-adenosyl-L-methionine = N(4)-methylcytidine(1402) in 16S rRNA + S-adenosyl-L-homocysteine + H(+). In terms of biological role, specifically methylates the N4 position of cytidine in position 1402 (C1402) of 16S rRNA. This is Ribosomal RNA small subunit methyltransferase H from Roseobacter denitrificans (strain ATCC 33942 / OCh 114) (Erythrobacter sp. (strain OCh 114)).